A 48-amino-acid chain; its full sequence is Fimbrial assembly protein, serogroup A1 (48 aa).

The protein is Fimbrial assembly protein, serogroup A1 (fimB) of Dichelobacter nodosus (Bacteroides nodosus).